A 186-amino-acid polypeptide reads, in one-letter code: Hydra actinoporin-like toxin 1 (186 aa).

The first 18 residues, 1–18 (MLLYICLVNLLLPLSVGA), serve as a signal peptide directing secretion. Positions 29–48 (KVGVDAALQQIDDVWKGKTV) are N-terminal region. The short motif at 158 to 160 (RAG) is the Cell attachment site, crucial for protein stability element.

This sequence belongs to the actinoporin family. HALT subfamily. In terms of assembly, octamer or nonamer in membranes. Monomer in the soluble state. In vitro, interacts with folate receptor alpha (of target organism). Expressed female germline during oogenesis.

The protein localises to the nematocyst. It localises to the secreted. It is found in the target cell membrane. Pore-forming protein that forms hydrophilic pores and causes cytolysis. Compared to equinatoxin-2 (AC P61914), it reveals lower cytolysis activity (5-12-fold difference, tested on erythrocytes), a larger pore size (probably 2-3 nm) and different affinity to membrane lipids (100-fold lower affinity to sphingomyelin). Binds to sulfatides (SFT) as well as to the two sphingolipids, lysophosphatidic acid (LPA) and sphingosine-1-phosphate (S1P). It seems to bind more strongly to LPA than to S1P and SFT. Shows cytolytic activity on HeLa cells, with a different potency than its paralogs (from most potent to less potent: HALT-4&gt;HALT-6~HALT-1&gt;HALT-3&gt;HALT-7&gt;HALT-2). Pore formation is a multi-step process that involves specific recognition of membrane lipid by a protein aromatic residues rich region, firm binding to the membrane (mainly driven by hydrophobic interactions) accompanied by the transfer of the N-terminal region to the lipid-water interface and finally pore formation after oligomerization of monomers. In vitro, binds to the folate receptor alpha (FOLR1), a GPI-anchored membrane protein that plays a major role in the uptake of folate/folic acid into cells via endocytosis, suggesting a possible involvement of this receptor in the mechanism of HALT-1-induced cell lysis. In vivo, does not cause visible paralysis in larvae of the blowfly Sarcophaga faculata, the most common arthropod prey of Hydra. The chain is Hydra actinoporin-like toxin 1 from Hydra vulgaris (Hydra).